The chain runs to 60 residues: LKCKKLVPLFSKTCPAGKNLCYKMFMVAAPHVPVKRGCIDVCPKSSLLVKYVCCNTDKCN.

4 disulfide bridges follow: Cys3-Cys21, Cys14-Cys38, Cys42-Cys53, and Cys54-Cys59.

It belongs to the three-finger toxin family. Short-chain subfamily. Type IA cytotoxin sub-subfamily. In terms of assembly, monomer in solution; Homodimer and oligomer in the presence of negatively charged lipids forming a pore with a size ranging between 20 and 30 Angstroms. In terms of tissue distribution, expressed by the venom gland.

It is found in the secreted. The protein resides in the target cell membrane. Its function is as follows. This three-finger cytotoxin is a basic protein that interacts and penetrates into the cell membrane, with the tips of all the three loops. Cytotoxins which have a Pro-30 (P-type) interacts with membrane stronger that those which have a 'Ser-28' (S-type). CTII interacts with membrane stronger than CTI. The sequence is that of Cytotoxin 2 from Naja oxiana (Central Asian cobra).